The chain runs to 139 residues: Holo-[acyl-carrier-protein] synthase (139 aa).

The Mg(2+) site is built by aspartate 8 and glutamate 61.

Belongs to the P-Pant transferase superfamily. AcpS family. Requires Mg(2+) as cofactor.

The protein localises to the cytoplasm. The enzyme catalyses apo-[ACP] + CoA = holo-[ACP] + adenosine 3',5'-bisphosphate + H(+). Its function is as follows. Transfers the 4'-phosphopantetheine moiety from coenzyme A to a Ser of acyl-carrier-protein. This Bradyrhizobium sp. (strain BTAi1 / ATCC BAA-1182) protein is Holo-[acyl-carrier-protein] synthase.